The chain runs to 472 residues: N(6)-adenine-specific methyltransferase METTL4 (472 aa).

The protein belongs to the MT-A70-like family.

The protein localises to the nucleus. It is found in the cytoplasm. Its subcellular location is the cytosol. The protein resides in the mitochondrion matrix. The enzyme catalyses a 2'-O-methyladenosine in U2 snRNA + S-adenosyl-L-methionine = an N(6)-methyl-2'-O-methyladenosine in U2 snRNA + S-adenosyl-L-homocysteine + H(+). It carries out the reaction a 2'-deoxyadenosine in DNA + S-adenosyl-L-methionine = an N(6)-methyl-2'-deoxyadenosine in DNA + S-adenosyl-L-homocysteine + H(+). In terms of biological role, n(6)-adenine-specific methyltransferase that can methylate both RNAs and DNA. Acts as a N(6)-adenine-specific RNA methyltransferase by catalyzing formation of N6,2'-O-dimethyladenosine (m6A(m)) on internal positions of U2 small nuclear RNA (snRNA): methylates the 6th position of adenine residues with a pre-deposited 2'-O-methylation. Internal m6A(m) methylation of snRNAs regulates RNA splicing. Also able to act as a N(6)-adenine-specific DNA methyltransferase by mediating methylation of DNA on the 6th position of adenine (N(6)-methyladenosine). The existence of N(6)-methyladenosine (m6A) on DNA is however unclear in mammals, and additional evidences are required to confirm the role of the N(6)-adenine-specific DNA methyltransferase activity of METTL4 in vivo. Acts as a regulator of mitochondrial transcript levels and mitochondrial DNA (mtDNA) copy number by mediating mtDNA N(6)-methylation: m6A on mtDNA reduces transcription by repressing TFAM DNA-binding and bending. N(6)-methyladenosine deposition by METTL4 regulates Polycomb silencing by triggering ubiquitination and degradation of sensor proteins ASXL1 and MPND, leading to inactivation of the PR-DUB complex and subsequent preservation of Polycomb silencing. The chain is N(6)-adenine-specific methyltransferase METTL4 from Homo sapiens (Human).